A 170-amino-acid chain; its full sequence is RxLR effector protein CRE16 (170 aa).

The first 23 residues, 1–23 (MSKLFYAFAVLAVHVLTSSPTTA), serve as a signal peptide directing secretion. The RxLR-dEER motif lies at 47-68 (RFLRSIHEGEDSLKPSAFSEER).

This sequence belongs to the RxLR effector family.

It is found in the secreted. The protein localises to the host cytoplasm. The protein resides in the host nucleus. Effector that is involved in host plant infection. Contributes to virulence during the early infection stage, by inhibiting plant defense responses induced by both PAMP-triggered immunity (PTI) and effector-triggered immunity (ETI). This chain is RxLR effector protein CRE16, found in Phytophthora infestans (strain T30-4) (Potato late blight agent).